The following is a 427-amino-acid chain: Tuberculostearic acid methyltransferase UfaA1 (427 aa).

It belongs to the CFA/CMAS family.

The protein operates within lipid metabolism; fatty acid biosynthesis. With respect to regulation, inhibited by S-adenosyl-L-homocysteine. Involved in the biosynthesis of the tuberculostearic acid (10-methylstearic-acid or TSA), a constituent lipid of the mycobacterial cell wall. Catalyzes the transfer of the methyl group from S-adenosyl-L-methionine (SAM) to the double bond of oleic acid in phosphatidylethanolamine or phosphatidylcholine to produce TSA. The chain is Tuberculostearic acid methyltransferase UfaA1 from Mycobacterium tuberculosis (strain ATCC 25618 / H37Rv).